We begin with the raw amino-acid sequence, 290 residues long: MAISKKSSLFLPIFTFITMFLMVVNKVSSSTHETNALHFMFNQFSKDQKDLILQGDATTGTDGNLELTRVSSNGSPQGSSVGRALFYAPVHIWESSAVVASFDATFTFLIKSPDSHPADGIAFFISNIDSSIPSGSTGRLLGLFPDANVIRNSTTIDFNAAYNADTIVAVELDTYPNTDIGDPNYPHIGIDIKSVRSKKTAKWNMQNGKVGTAHIIYNSVGKRLSAVVSYPNGDSATVSYDVDLDNVLPEWVRVGLSASTGLYKETNTILSWSFTSKLKSNEIPDIATVV.

The N-terminal stretch at 1–29 is a signal peptide; it reads MAISKKSSLFLPIFTFITMFLMVVNKVSS. Residues aspartate 119 and arginine 139 each contribute to the a carbohydrate site. Residue aspartate 119 participates in Ca(2+) binding. The propeptide occupies 149-163; that stretch reads VIRNSTTIDFNAAYN. N-linked (GlcNAc...) asparagine glycosylation is present at asparagine 152. The Mn(2+) site is built by glutamate 171 and aspartate 173. Positions 173, 175, 177, and 182 each coordinate Ca(2+). Mn(2+) is bound by residues aspartate 182 and histidine 187. 262–263 provides a ligand contact to a carbohydrate; it reads LY. The propeptide occupies 282-290; sequence EIPDIATVV.

It belongs to the leguminous lectin family. As to quaternary structure, homotetramer. In terms of processing, the mature chain consists of residues 164-281 followed by 30-148. To form a mature chain the precursor undergoes further post-translational modification after removal of the signal sequence; cleavage after Asn at positions Asn-148, Asn-163, and Asn-281 is followed by transposition and ligation (By formation of a new peptide bond) of residues 164-281 and 30-148.

In terms of biological role, glucose/D-mannose/rhamnose specific lectin. Has hemagglutinating activity towards rabbit erythrocytes. Has mitogenic activity towards murine splenocytes that is inhibited by glucose. Inhibits HIV-1 reverse transcriptase with an IC(50) of 35 uM. Has a potent antiproliferative activity against L1210 leukemia cells in vitro that is not inhibited by glucose. Inhibits translation in cell-free rabbit reticulocyte system with an IC(50) of 2.08 uM. Lacks anti-fungal activity against M.arachidicola, B.cenera and F.oxysporum. This Canavalia gladiata (Sword bean) protein is Concanavalin-A.